The chain runs to 509 residues: ESX-2 secretion system protein eccD2 (509 aa).

The next 11 helical transmembrane spans lie at 135–155 (LTAAHTAMAIIAMAVGVVLAL), 170–190 (AMAGGIGVLLVIGALVVWWGW), 196–216 (LFSGFGWLAVVLLAVAAACAP), 222–242 (AAHALIGLVVVVLGAITIGVA), 248–268 (QTAVVTAVVTVCGILAAVAAV), 281–301 (ICVLVGLLVLIRMTPTVALWV), 364–384 (VQVGMCVGVSLVLPAAVWGVL), 389–409 (PWAWLALLVAGLTVGLFITQG), 418–438 (AVALVCGASAAVCAGVLKYAL), 449–469 (LWPAIFVAAFAALGLAVALVV), and 487–507 (VLAMIALLPAAAALGGLFAWL).

The protein belongs to the EccD/Snm4 family. As to quaternary structure, part of the ESX-2 / type VII secretion system (T7SS), which is composed of cytosolic and membrane components.

It is found in the cell membrane. This chain is ESX-2 secretion system protein eccD2 (eccD2), found in Mycobacterium tuberculosis (strain CDC 1551 / Oshkosh).